The following is a 344-amino-acid chain: Estradiol 17-beta-dehydrogenase 1 (344 aa).

Residue 3–32 (STVVLITGCSSGIGLHLAVRLASDRSQSFK) coordinates NAD(+). S143 serves as a coordination point for substrate. Residue Y156 is the Proton acceptor of the active site.

Belongs to the short-chain dehydrogenases/reductases (SDR) family. In terms of assembly, homodimer.

Its subcellular location is the cytoplasm. The catalysed reaction is 17beta-estradiol + NAD(+) = estrone + NADH + H(+). The enzyme catalyses 17beta-estradiol + NADP(+) = estrone + NADPH + H(+). It functions in the pathway steroid biosynthesis; estrogen biosynthesis. In terms of biological role, favors the reduction of estrogens and androgens. Uses preferentially NADH. This Rattus norvegicus (Rat) protein is Estradiol 17-beta-dehydrogenase 1 (Hsd17b1).